We begin with the raw amino-acid sequence, 497 residues long: Ammonium transporter Rh type C (497 aa).

The Cytoplasmic segment spans residues 1-9; sequence MAWNTNLRG. A helical transmembrane segment spans residues 10–30; the sequence is RLPITCLILQVTMVVLFGVFV. Topologically, residues 31-61 are extracellular; sequence RYDIQADAHWWLEKKRKNISSDVENEFYYRY. The N-linked (GlcNAc...) asparagine glycan is linked to N48. A helical transmembrane segment spans residues 62-82; that stretch reads PSFEDVHAMVFVGFGFLMTYL. Residues 83–93 lie on the Cytoplasmic side of the membrane; it reads QRYGFSAVGFN. A helical transmembrane segment spans residues 94–114; sequence FLLAAFGIQWALLMQGWFHFF. Over 115–125 the chain is Extracellular; that stretch reads EEGHILLSVEN. Residues 126–145 traverse the membrane as a helical segment; that stretch reads LIQADFCVASTCVAFGAVLG. Over 146–151 the chain is Cytoplasmic; sequence KISPMQ. Residues 152–174 form a helical membrane-spanning segment; that stretch reads LLIMTFFQVTLFTVNEFILLNLI. At 175–179 the chain is on the extracellular side; sequence EAKDA. A helical membrane pass occupies residues 180–200; it reads GGSMTIHTFGAYFGLTVTWIL. Residues 201 to 219 are Cytoplasmic-facing; it reads YRKNLEQSKQRQSSVYHSD. The chain crosses the membrane as a helical span at residues 220–240; the sequence is LFAMIGTLFLWIYWPSFNSAS. Over 241 to 251 the chain is Extracellular; sequence SFHGDTQHRAA. The chain crosses the membrane as a helical span at residues 252 to 272; the sequence is LNTYLSLAASVLTTVAVSSVI. Over 273-282 the chain is Cytoplasmic; sequence HKKGKLDMVH. A helical transmembrane segment spans residues 283–303; that stretch reads IQNATLAGGVGVGTAAEMMLT. P304 is a topological domain (extracellular). A helical membrane pass occupies residues 305 to 325; that stretch reads YGALIVGFFCGILSTLGFAYL. At 326 to 340 the chain is on the cytoplasmic side; it reads SPFLESRLRIQDTCG. Residues 341–361 form a helical membrane-spanning segment; it reads IHNLHGIPGIIGGIVGAVTAA. The Extracellular segment spans residues 362 to 395; sequence YSSPDVYGEPGIVHSFGFGGYKADWTKRMQGRSQ. A helical transmembrane segment spans residues 396 to 416; the sequence is IFGLLLSLAMALVGGIIVGFI. At 417–497 the chain is on the cytoplasmic side; that stretch reads LKLPFWGQAS…ATVTSSSLVH (81 aa).

This sequence belongs to the ammonium transporter (TC 2.A.49) family. Rh subfamily. As to quaternary structure, homotrimer. In terms of processing, N-glycosylated. As to expression, expressed by connecting tubule cells and intercalated cells of the collecting duct in kidney (at protein level).

The protein resides in the cell membrane. Its subcellular location is the apical cell membrane. It catalyses the reaction NH4(+)(in) = NH4(+)(out). It carries out the reaction methylamine(out) = methylamine(in). The catalysed reaction is CO2(out) = CO2(in). Its function is as follows. Ammonium transporter involved in the maintenance of acid-base homeostasis. Transports ammonium and its related derivative methylammonium across the plasma membrane of epithelial cells likely contributing to renal transepithelial ammonia transport and ammonia metabolism. Postulated to primarily mediate an electroneutral bidirectional transport of NH3 ammonia species according to a mechanism that implies interaction of an NH4(+) ion with acidic residues of the pore entry followed by dissociation of NH4(+) into NH3 and H(+). As a result NH3 transits through the central pore and is protonated on the extracellular side reforming NH4(+). May act as a CO2 channel providing for renal acid secretion. This chain is Ammonium transporter Rh type C (Rhcg), found in Rattus norvegicus (Rat).